The primary structure comprises 401 residues: Probable [pyruvate dehydrogenase (acetyl-transferring)] kinase, mitochondrial (401 aa).

The Histidine kinase domain maps to 131–360 (LIELRESDGV…DACIYLKAVP (230 aa)). Residues 247 to 254 (ELFKNAMR), Asp-286, 305 to 306 (ST), and 321 to 326 (GYGYGL) each bind ATP.

The protein belongs to the PDK/BCKDK protein kinase family.

It localises to the mitochondrion matrix. It catalyses the reaction L-seryl-[pyruvate dehydrogenase E1 alpha subunit] + ATP = O-phospho-L-seryl-[pyruvate dehydrogenase E1 alpha subunit] + ADP + H(+). Inhibits the mitochondrial pyruvate dehydrogenase complex by phosphorylation of the E1 alpha subunit, thus contributing to the regulation of glucose metabolism. Required for normal lifespan. The sequence is that of Probable [pyruvate dehydrogenase (acetyl-transferring)] kinase, mitochondrial (pdhk-2) from Caenorhabditis elegans.